The following is a 206-amino-acid chain: Alpha-S1-casein (206 aa).

The N-terminal stretch at 1–15 (MKLLIFICLAAVALA) is a signal peptide. 8 positions are modified to phosphoserine: Ser-33, Ser-77, Ser-78, Ser-79, Ser-80, Ser-81, Ser-82, and Ser-89. The interval 67-106 (HGMEGHEQRGSSSSSSEEVVGNSAEQKHVQKEEDVPSQSY) is disordered. A compositionally biased stretch (basic and acidic residues) spans 91–100 (EQKHVQKEED).

It belongs to the alpha-casein family. Mammary gland specific. Secreted in milk.

Its subcellular location is the secreted. Functionally, important role in the capacity of milk to transport calcium phosphate. The chain is Alpha-S1-casein (CSN1S1) from Sus scrofa (Pig).